The sequence spans 129 residues: UPF0102 protein Mrad2831_2938 (129 aa).

Belongs to the UPF0102 family.

In Methylobacterium radiotolerans (strain ATCC 27329 / DSM 1819 / JCM 2831 / NBRC 15690 / NCIMB 10815 / 0-1), this protein is UPF0102 protein Mrad2831_2938.